Reading from the N-terminus, the 992-residue chain is Ribosome quality control complex subunit NEMF homolog (992 aa).

A compositionally biased stretch (basic and acidic residues) spans 214–231 (KETTEETPEAEDKPEKGG). Residues 214 to 245 (KETTEETPEAEDKPEKGGKKQRKKQQNTKLEQ) are disordered. 2 coiled-coil regions span residues 331–370 (STQE…LTKV) and 481–514 (SAAQ…VRTI). 2 disordered regions span residues 688–715 (EVEH…NTEI) and 771–895 (GPSR…GDVD). A compositionally biased stretch (polar residues) spans 702–715 (SNINLSEPSSNTEI). Positions 774–839 (RKKQVSAKKT…QDDEEREIRM (66 aa)) form a coiled coil. Over residues 782–796 (KTKEDKARAKQEAAK) the composition is skewed to basic and acidic residues. Residues 814 to 825 (RGQKGKLKKMKQ) show a composition bias toward basic residues. Positions 845-874 (SGKEKPQASADKVVEKSESTKEYVKPEKSA) are enriched in basic and acidic residues.

This sequence belongs to the NEMF family. In terms of assembly, component of the ribosome quality control complex (RQC), composed of at least the E3 ubiquitin ligase l(3)76BDr/LTN1 and Clbn/NEMF associated with the 60S ribosomal subunit. The complex probably also contains TCF25 as well as TER94/VCP and its ubiquitin-binding cofactors. Interacts (via its C-terminus) with pros (via its homeobox). Interacts (via its N-terminus) with emb. Expressed in enterocytes (at protein level).

Its subcellular location is the nucleus. The protein resides in the cytoplasm. The protein localises to the mitochondrion outer membrane. In terms of biological role, key component of the ribosome quality control complex (RQC), a ribosome-associated complex that mediates the extraction of incompletely synthesized nascent chains from stalled ribosomes as well as their ubiquitin-mediated proteasomal degradation. Thereby, frees 60S subunit ribosomes from the stalled translation complex and prevents the accumulation of nascent polypeptide chains that are potentially toxic for the cell. Within the RQC complex, Clbn/NEMF specifically binds stalled 60S ribosomal subunits by recognizing an exposed, nascent chain-conjugated tRNA moiety. Following binding to stalled 60S ribosomal subunits, Clbn/NEMF mediates CAT tailing by recruiting alanine-charged tRNA to the A-site and directing the elongation of stalled nascent chains independently of mRNA or 40S subunits, leading to non-templated C-terminal alanine extensions (CAT tails). On mitochondrial surface, plays a role in mitochondrial-stress induced translational termination impairment and protein carboxyl terminal extension (MISTERMINATE). Plays a role in regulating nuclear transport possibly through directly binding to both emb and cargo proteins. Plays a role in the regulation of G1-to-S cell cycle transition. Regulates S phase checkpoint by antagonizing E2F1 activity. Together with hid and tefu/ATM, plays a role in DNA damage-induced apoptosis through both p53-dependent and -independent activity. Plays an essential role in the regulation of mitochondrial structure and redox state in enterocytes which is essential for the control of intestinal stem cells proliferation and intestinal homeostasis. This Drosophila melanogaster (Fruit fly) protein is Ribosome quality control complex subunit NEMF homolog.